A 91-amino-acid polypeptide reads, in one-letter code: Putative regulatory protein CLB_2388 (91 aa).

The protein belongs to the RemA family.

This chain is Putative regulatory protein CLB_2388, found in Clostridium botulinum (strain ATCC 19397 / Type A).